The primary structure comprises 194 residues: Protein phosphatase 1 regulatory subunit 1B (194 aa).

Residue Met1 is modified to N-acetylmethionine. The disordered stretch occupies residues 1 to 194 (MDPKDRKKIQ…GEEPQHPSPP (194 aa)). Thr34 carries the phosphothreonine; by PKA modification. A compositionally biased stretch (basic and acidic residues) spans 41-63 (VSEHSSPEEEASPHQRTSGEGHH). Phosphoserine occurs at positions 45 and 46. Thr75 is subject to Phosphothreonine. Residues 84–95 (HLQTISNLSENQ) show a composition bias toward polar residues. Residues Ser97 and Ser130 each carry the phosphoserine modification. Residues 113–131 (QEDDEEDEDEEEDEEEDSQ) show a composition bias toward acidic residues. Positions 160–170 (PPLDEPQRDGN) are enriched in basic and acidic residues. Ser192 is subject to Phosphoserine.

The protein belongs to the protein phosphatase inhibitor 1 family. Post-translationally, dopamine- and cyclic AMP-regulated neuronal phosphoprotein. In terms of processing, phosphorylation of Thr-34 is required for activity.

It is found in the cytoplasm. In terms of biological role, inhibitor of protein-phosphatase 1. The protein is Protein phosphatase 1 regulatory subunit 1B (Ppp1r1b) of Mus musculus (Mouse).